A 514-amino-acid chain; its full sequence is H/ACA ribonucleoprotein complex subunit DKC1 (514 aa).

Alanine 2 carries the N-acetylalanine modification. Residues 2 to 21 (ADAEVIILPKKHKKKKERKS) are nucleolar localization. Lysine 20 participates in a covalent cross-link: Glycyl lysine isopeptide (Lys-Gly) (interchain with G-Cter in SUMO2). Serine 21 carries the phosphoserine modification. Residues lysine 39 and lysine 43 each participate in a glycyl lysine isopeptide (Lys-Gly) (interchain with G-Cter in SUMO2) cross-link. The active-site Nucleophile is the aspartate 125. A Glycyl lysine isopeptide (Lys-Gly) (interchain with G-Cter in SUMO2) cross-link involves residue lysine 191. The PUA domain occupies 296–371 (HKRLVMKDSA…IVAKIKRVIM (76 aa)). Serine 387 carries the post-translational modification Phosphoserine. Lysine 394 participates in a covalent cross-link: Glycyl lysine isopeptide (Lys-Gly) (interchain with G-Cter in SUMO2). Lysine 413 participates in a covalent cross-link: Glycyl lysine isopeptide (Lys-Gly) (interchain with G-Cter in SUMO1); alternate. Residue lysine 413 forms a Glycyl lysine isopeptide (Lys-Gly) (interchain with G-Cter in SUMO2); alternate linkage. Glycyl lysine isopeptide (Lys-Gly) (interchain with G-Cter in SUMO2) cross-links involve residues lysine 424 and lysine 433. The segment at 443–514 (KTAKRKRESE…KAKEVELVSE (72 aa)) is disordered. The tract at residues 446 to 514 (KRKRESESES…KAKEVELVSE (69 aa)) is nuclear and nucleolar localization. 3 positions are modified to phosphoserine: serine 451, serine 453, and serine 455. Threonine 458 is modified (phosphothreonine). Lysine 467 is covalently cross-linked (Glycyl lysine isopeptide (Lys-Gly) (interchain with G-Cter in SUMO2)). The span at 468-480 (KEKKKSKKDKKAK) shows a compositional bias: basic residues. Phosphoserine is present on residues serine 485, serine 494, and serine 513.

This sequence belongs to the pseudouridine synthase TruB family. In terms of assembly, part of the H/ACA small nucleolar ribonucleoprotein (H/ACA snoRNP) complex, which contains NHP2/NOLA2, GAR1/NOLA1, NOP10/NOLA3, and DKC1/NOLA4, which is presumed to be the catalytic subunit. The complex contains a stable core formed by binding of one or two NOP10-DKC1 heterodimers to NHP2; GAR1 subsequently binds to this core via DKC1. The complex binds a box H/ACA small nucleolar RNA (snoRNA), which may target the specific site of modification within the RNA substrate. During assembly, the complex contains NAF1 instead of GAR1/NOLA1. The complex also interacts with TERC, which contains a 3'-terminal domain related to the box H/ACA snoRNAs. Specific interactions with snoRNAs or TERC are mediated by GAR1 and NHP2. Associates with NOLC1/NOPP140. H/ACA snoRNPs interact with the SMN complex, consisting of SMN1 or SMN2, GEMIN2/SIP1, DDX20/GEMIN3, and GEMIN4. This is mediated by interaction between GAR1 and SMN1 or SMN2. The SMN complex may be required for correct assembly of the H/ACA snoRNP complex. Component of the telomerase holoenzyme complex composed of one molecule of TERT, one molecule of WRAP53/TCAB1, two molecules of H/ACA ribonucleoprotein complex subunits DKC1, NOP10, NHP2 and GAR1, and a telomerase RNA template component (TERC). The telomerase holoenzyme complex is associated with TEP1, SMG6/EST1A and POT1. Interacts with SHQ1; this interaction may lead to the stabilization of DKC1, from the time of its synthesis until its association with NOP10, NHP2, and NAF1 at the nascent H/ACA RNA. Interacts with HMBOX1. Interacts with DHX36. As to expression, ubiquitously expressed.

It localises to the nucleus. It is found in the nucleolus. Its subcellular location is the cajal body. The protein localises to the cytoplasm. It catalyses the reaction uridine in 5S rRNA = pseudouridine in 5S rRNA. In terms of biological role, catalytic subunit of H/ACA small nucleolar ribonucleoprotein (H/ACA snoRNP) complex, which catalyzes pseudouridylation of rRNA. This involves the isomerization of uridine such that the ribose is subsequently attached to C5, instead of the normal N1. Each rRNA can contain up to 100 pseudouridine ('psi') residues, which may serve to stabilize the conformation of rRNAs. Required for ribosome biogenesis and telomere maintenance. Also required for correct processing or intranuclear trafficking of TERC, the RNA component of the telomerase reverse transcriptase (TERT) holoenzyme. Promotes cell to cell and cell to substratum adhesion, increases the cell proliferation rate and leads to cytokeratin hyper-expression. This Homo sapiens (Human) protein is H/ACA ribonucleoprotein complex subunit DKC1.